The chain runs to 197 residues: Phospholipid hydroperoxide glutathione peroxidase (197 aa).

Ser40 is modified (phosphoserine). Sec73 is an active-site residue. Sec73 is a non-standard amino acid (selenocysteine).

It belongs to the glutathione peroxidase family. In terms of assembly, monomer. Has a tendency to form higher mass oligomers. Interacts with FUNDC1; this interaction promotes GPX4 recruitment into mitochondria through TOM/TIM complex where it is degraded by mitophagy.

It is found in the mitochondrion. The protein resides in the cytoplasm. It catalyses the reaction a hydroperoxy polyunsaturated fatty acid + 2 glutathione = a hydroxy polyunsaturated fatty acid + glutathione disulfide + H2O. The enzyme catalyses 2 glutathione + H2O2 = glutathione disulfide + 2 H2O. It carries out the reaction tert-butyl hydroperoxide + 2 glutathione = tert-butanol + glutathione disulfide + H2O. The catalysed reaction is cumene hydroperoxide + 2 glutathione = 2-phenylpropan-2-ol + glutathione disulfide + H2O. It catalyses the reaction (9S)-hydroperoxy-(10E,12Z)-octadecadienoate + 2 glutathione = (9S)-hydroxy-(10E,12Z)-octadecadienoate + glutathione disulfide + H2O. The enzyme catalyses (13S)-hydroperoxy-(9Z,11E)-octadecadienoate + 2 glutathione = (13S)-hydroxy-(9Z,11E)-octadecadienoate + glutathione disulfide + H2O. It carries out the reaction (5S)-hydroperoxy-(6E,8Z,11Z,14Z)-eicosatetraenoate + 2 glutathione = (5S)-hydroxy-(6E,8Z,11Z,14Z)-eicosatetraenoate + glutathione disulfide + H2O. The catalysed reaction is (12R)-hydroperoxy-(5Z,8Z,10E,14Z)-eicosatetraenoate + 2 glutathione = (12R)-hydroxy-(5Z,8Z,10E,14Z)-eicosatetraenoate + glutathione disulfide + H2O. It catalyses the reaction (12S)-hydroperoxy-(5Z,8Z,10E,14Z)-eicosatetraenoate + 2 glutathione = (12S)-hydroxy-(5Z,8Z,10E,14Z)-eicosatetraenoate + glutathione disulfide + H2O. The enzyme catalyses (15S)-hydroperoxy-(5Z,8Z,11Z,13E)-eicosatetraenoate + 2 glutathione = (15S)-hydroxy-(5Z,8Z,11Z,13E)-eicosatetraenoate + glutathione disulfide + H2O. It carries out the reaction (5S)-hydroperoxy-(6E,8Z,11Z,14Z,17Z)-eicosapentaenoate + 2 glutathione = (5S)-hydroxy-(6E,8Z,11Z,14Z,17Z)-eicosapentaenoate + glutathione disulfide + H2O. The catalysed reaction is (12S)-hydroperoxy-(5Z,8Z,10E,14Z,17Z)-eicosapentaenoate + 2 glutathione = (12S)-hydroxy-(5Z,8Z,10E,14Z,17Z)-eicosapentaenoate + glutathione disulfide + H2O. It catalyses the reaction (15S)-hydroperoxy-(5Z,8Z,11Z,13E,17Z)-eicosapentaenoate + 2 glutathione = (15S)-hydroxy-(5Z,8Z,11Z,13E,17Z)-eicosapentaenoate + glutathione disulfide + H2O. The enzyme catalyses (15S)-hydroperoxy-(11Z,13E)-eicosadienoate + 2 glutathione = (15S)-hydroxy-(11Z,13E)-eicosadienoate + glutathione disulfide + H2O. It carries out the reaction (17S)-hydroperoxy-(4Z,7Z,10Z,13Z,15E,19Z)-docosahexaenoate + 2 glutathione = (17S)-hydroxy-(4Z,7Z,10Z,13Z,15E,19Z)-docosahexaenoate + glutathione disulfide + H2O. The catalysed reaction is a hydroperoxy-1,2-diacyl-glycero-3-phosphocholine + 2 glutathione = a hydroxy-1,2-diacyl-glycero-3-phosphocholine + glutathione disulfide + H2O. Functionally, essential antioxidant peroxidase that directly reduces phospholipid hydroperoxide even if they are incorporated in membranes and lipoproteins. Can also reduce fatty acid hydroperoxide, cholesterol hydroperoxide and thymine hydroperoxide. Plays a key role in protecting cells from oxidative damage by preventing membrane lipid peroxidation. Required to prevent cells from ferroptosis, a non-apoptotic cell death resulting from an iron-dependent accumulation of lipid reactive oxygen species. The presence of selenocysteine (Sec) versus Cys at the active site is essential for life: it provides resistance to overoxidation and prevents cells against ferroptosis. The presence of Sec at the active site is also essential for the survival of a specific type of parvalbumin-positive interneurons, thereby preventing against fatal epileptic seizures. May be required to protect cells from the toxicity of ingested lipid hydroperoxides. Required for normal sperm development and male fertility. Essential for maturation and survival of photoreceptor cells. Plays a role in a primary T-cell response to viral and parasitic infection by protecting T-cells from ferroptosis and by supporting T-cell expansion. Plays a role of glutathione peroxidase in platelets in the arachidonic acid metabolism. Reduces hydroperoxy ester lipids formed by a 15-lipoxygenase that may play a role as down-regulator of the cellular 15-lipoxygenase pathway. Can also reduce small soluble hydroperoxides such as H2O2, cumene hydroperoxide and tert-butyl hydroperoxide. This is Phospholipid hydroperoxide glutathione peroxidase from Hylobates lar (Lar gibbon).